A 554-amino-acid chain; its full sequence is 2-succinyl-5-enolpyruvyl-6-hydroxy-3-cyclohexene-1-carboxylate synthase (554 aa).

Belongs to the TPP enzyme family. MenD subfamily. In terms of assembly, homodimer. The cofactor is Mg(2+). Mn(2+) serves as cofactor. Thiamine diphosphate is required as a cofactor.

It carries out the reaction isochorismate + 2-oxoglutarate + H(+) = 5-enolpyruvoyl-6-hydroxy-2-succinyl-cyclohex-3-ene-1-carboxylate + CO2. It functions in the pathway quinol/quinone metabolism; 1,4-dihydroxy-2-naphthoate biosynthesis; 1,4-dihydroxy-2-naphthoate from chorismate: step 2/7. It participates in quinol/quinone metabolism; menaquinone biosynthesis. In terms of biological role, catalyzes the thiamine diphosphate-dependent decarboxylation of 2-oxoglutarate and the subsequent addition of the resulting succinic semialdehyde-thiamine pyrophosphate anion to isochorismate to yield 2-succinyl-5-enolpyruvyl-6-hydroxy-3-cyclohexene-1-carboxylate (SEPHCHC). The chain is 2-succinyl-5-enolpyruvyl-6-hydroxy-3-cyclohexene-1-carboxylate synthase from Renibacterium salmoninarum (strain ATCC 33209 / DSM 20767 / JCM 11484 / NBRC 15589 / NCIMB 2235).